Consider the following 737-residue polypeptide: Alpha-adducin (737 aa).

Met1 bears the N-acetylmethionine mark. The tract at residues 1–21 (MNGDSRAAVVTSPPPTTAPHK) is disordered. The residue at position 12 (Ser12) is a Phosphoserine. At Ser59 the chain carries Phosphoserine; by PKA. At Ser64 the chain carries Phosphoserine. Thr331 is modified (phosphothreonine). A phosphoserine mark is found at Ser334, Ser353, Ser355, Ser358, and Ser366. Ser408 is modified (phosphoserine; by PKA). Residues 419–430 (YSFTSDGDSGTC) are compositionally biased toward polar residues. 2 disordered regions span residues 419–490 (YSFT…NLFV) and 576–737 (RREV…KSES). A Phosphoserine modification is found at Ser427. Thr429 is modified (phosphothreonine). Ser431 bears the Phosphoserine mark. Ser436 is subject to Phosphoserine; by PKA. Residue Thr445 is modified to Phosphothreonine; by ROCK2. Residues Ser464 and Ser465 each carry the phosphoserine modification. Position 480 is a phosphothreonine; by ROCK2 (Thr480). Ser481 carries the phosphoserine; by PKA modification. Residues 576 to 601 (RREVERKQKGSEENLDEAREQKEKSP) are compositionally biased toward basic and acidic residues. Residues Ser586, Ser600, and Ser613 each carry the phosphoserine modification. A compositionally biased stretch (pro residues) spans 602-614 (PDQPAVPYPPPST). At Thr614 the chain carries Phosphothreonine. A phosphoserine mark is found at Ser678, Ser707, Ser710, and Ser714. The span at 687-714 (PVAEEAAPSAAEEGAAADPGSDGSPGKS) shows a compositional bias: low complexity. The segment covering 715 to 737 (PSKKKKKFRTPSFLKKSKKKSES) has biased composition (basic residues). Position 716 is a phosphoserine; by PKC (Ser716). Positions 717 to 734 (KKKKKFRTPSFLKKSKKK) are interaction with calmodulin. Ser726 is modified (phosphoserine; by PKA and PKC).

It belongs to the aldolase class II family. Adducin subfamily. In terms of assembly, heterodimer of an alpha and a beta subunit or an alpha and a gamma subunit.

The protein resides in the cytoplasm. It localises to the cytoskeleton. Its subcellular location is the cell membrane. Functionally, membrane-cytoskeleton-associated protein that promotes the assembly of the spectrin-actin network. Binds to calmodulin. The sequence is that of Alpha-adducin (ADD1) from Pongo abelii (Sumatran orangutan).